The primary structure comprises 351 residues: Methylthioribose-1-phosphate isomerase (351 aa).

Residues 51–53 (RGA), arginine 94, and glutamine 199 contribute to the substrate site. Aspartate 240 (proton donor) is an active-site residue. A substrate-binding site is contributed by 250–251 (NK).

Belongs to the EIF-2B alpha/beta/delta subunits family. MtnA subfamily. Homodimer.

The enzyme catalyses 5-(methylsulfanyl)-alpha-D-ribose 1-phosphate = 5-(methylsulfanyl)-D-ribulose 1-phosphate. The protein operates within amino-acid biosynthesis; L-methionine biosynthesis via salvage pathway; L-methionine from S-methyl-5-thio-alpha-D-ribose 1-phosphate: step 1/6. Its function is as follows. Catalyzes the interconversion of methylthioribose-1-phosphate (MTR-1-P) into methylthioribulose-1-phosphate (MTRu-1-P). The chain is Methylthioribose-1-phosphate isomerase from Bacillus cereus (strain ZK / E33L).